The following is a 138-amino-acid chain: Large ribosomal subunit protein uL13 (138 aa).

The protein belongs to the universal ribosomal protein uL13 family. In terms of assembly, part of the 50S ribosomal subunit.

Its function is as follows. This protein is one of the early assembly proteins of the 50S ribosomal subunit, although it is not seen to bind rRNA by itself. It is important during the early stages of 50S assembly. The protein is Large ribosomal subunit protein uL13 of Picrophilus torridus (strain ATCC 700027 / DSM 9790 / JCM 10055 / NBRC 100828 / KAW 2/3).